A 699-amino-acid chain; its full sequence is WIIPFVPLPVPMLIGVGLLLFPIXTNKLRRMWAFPSILLLSIVMIFSTNLSIQQINSNSIYQYVWSWTLDNDFSLELGCLIDPLTSIMSMLITIVGITVLIYSDNYMAHDQGYLRFFAYMSFFSTSMLGLVTSSNLIQIYIFWELVGVCSYLLIGFWFTRPLAANACQKAFVTNRVGDFGLLLGILGFYWITGSFEFRDLFEIFNNLIVNNQVNYLFVTLCAALLFAGAVAKSAQFPLHVWLPDAMEGPTPISALIHAATMVAEGIFLVARLLPLFIVIPYIMNFISLIGIITVLLGATLALAQKDIKRGLAYSTMSQLGYMMLALGMGSYRSALFHLITHAYSKALLFLGSGSVIHSMETIVGYSPEKSQNMVLMGGLRKYVPITKISFLLGTLSLCGIPPLACFWSKDEILNDSWLYSPIFAIIAWATAGLTAFYMFRIYLLTFEGHLNVYFQNYSGKKNTAFYSISIWGKGCSKRINKNFRLLRINNQSSSFFLKKTYRSDENLKKRNGGRPFINLIRFENKKARLYPYESDNTMLFPLLILVLFTLFVGYLGISFNQEARDLDILSKWLAPSIDLLHQKSRDLTDWYEFLKDAIFSVSIAYFGILLASLLYKPIFASFKNFDLINSFVKTGPKRSRWDKILTLLYNWSHNRAYIDVFYTTSFTGSIRGLSQLTHFFDTQVIDGITNGVGVMSFFV.

15 helical membrane passes run 1 to 21 (WIIP…LLLF), 32 to 52 (WAFP…NLSI), 81 to 101 (IDPL…TVLI), 117 to 137 (FAYM…SNLI), 139 to 159 (IYIF…FWFT), 177 to 197 (GDFG…SFEF), 216 to 236 (LFVT…SAQF), 250 to 270 (TPIS…FLVA), 272 to 292 (LLPL…IGII), 319 to 339 (LGYM…FHLI), 346 to 366 (ALLF…VGYS), 388 to 408 (ISFL…CFWS), 417 to 437 (WLYS…TAFY), 539 to 559 (LFPL…GISF), and 598 to 618 (IFSV…YKPI).

Belongs to the complex I subunit 5 family. As to quaternary structure, NDH is composed of at least 16 different subunits, 5 of which are encoded in the nucleus.

Its subcellular location is the plastid. It is found in the chloroplast thylakoid membrane. The catalysed reaction is a plastoquinone + NADH + (n+1) H(+)(in) = a plastoquinol + NAD(+) + n H(+)(out). It carries out the reaction a plastoquinone + NADPH + (n+1) H(+)(in) = a plastoquinol + NADP(+) + n H(+)(out). Its function is as follows. NDH shuttles electrons from NAD(P)H:plastoquinone, via FMN and iron-sulfur (Fe-S) centers, to quinones in the photosynthetic chain and possibly in a chloroplast respiratory chain. The immediate electron acceptor for the enzyme in this species is believed to be plastoquinone. Couples the redox reaction to proton translocation, and thus conserves the redox energy in a proton gradient. The protein is NAD(P)H-quinone oxidoreductase subunit 5, chloroplastic (ndhF) of Digitalis grandiflora (Yellow foxglove).